Consider the following 167-residue polypeptide: MKNEVKFMSEVIKVVDVKIFPHRYLKAETTEKVLNEIYDLDGIVRVIVHGQPLPKTVPFGPARGLPVNHQDRKVIKVKGEEMELRVKVGEIIITVEGEKLEKIMDGIEEICKRNFPFGYDIYVGAFTKIKPTVTDYMKYGDISSIDPRLIGMVDASARLKDSVKMIK.

As to quaternary structure, MCR is composed of three subunits: alpha, beta, and gamma. The function of protein D is not known.

The polypeptide is Methyl-coenzyme M reductase II operon protein D (mrtD) (Methanocaldococcus jannaschii (strain ATCC 43067 / DSM 2661 / JAL-1 / JCM 10045 / NBRC 100440) (Methanococcus jannaschii)).